The following is a 346-amino-acid chain: MAASGKLSTCRLPPLPTIREIIKLLRLQAAKQLSQNFLLDLRLTDKIVRKAGNLTNAYVYEVGPGPGGITRSILNADVAELLVVEKDTRFIPGLQMLSDAAPGKLRIVHGDVLTFKVEKAFSESLKRPWEDDPPNVHIIGNLPFSVSTPLIIKWLENISCRDGPFVYGRTQMTLTFQKEVAERLAANTGSKQRSRLSVMAQYLCNVRHIFTIPGQAFVPKPEVDVGVVHFTPLIQPKIEQPFKLVEKVVQNVFQFRRKYCHRGLRMLFPEAQRLESTGRLLELADIDPTLRPRQLSISHFKSLCDVYRKMCDEDPQLFAYNFREELKRRKSKNEEKEEDDAENYRL.

The transit peptide at M1–L27 directs the protein to the mitochondrion. S-adenosyl-L-methionine is bound by residues L38, G63, E85, K86, D111, V112, and N141.

This sequence belongs to the class I-like SAM-binding methyltransferase superfamily. rRNA adenine N(6)-methyltransferase family. KsgA subfamily. As to quaternary structure, interacts with mitochondrial RNA polymerase POLRMT. Interacts with TFAM. Bound to the maturing mtSSU until the late stages of assembly. In terms of tissue distribution, ubiquitously expressed.

Its subcellular location is the mitochondrion. It catalyses the reaction adenosine(N)/adenosine(N+1) in rRNA + 4 S-adenosyl-L-methionine = N(6)-dimethyladenosine(N)/N(6)-dimethyladenosine(N+1) in rRNA + 4 S-adenosyl-L-homocysteine + 4 H(+). Mitochondrial methyltransferase which uses S-adenosyl methionine to dimethylate two highly conserved adjacent adenosine residues (A1583 and A1584) within the loop of helix 45 at the 3-prime end of 12S rRNA, thereby regulating the assembly or stability of the small subunit of the mitochondrial ribosome. Also required for basal transcription of mitochondrial DNA, probably via its interaction with POLRMT and TFAM. Stimulates transcription independently of the methyltransferase activity. This is Dimethyladenosine transferase 1, mitochondrial from Homo sapiens (Human).